Here is a 378-residue protein sequence, read N- to C-terminus: Ferredoxin--NADP reductase, root isozyme 1, chloroplastic (378 aa).

A chloroplast-targeting transit peptide spans Met-1–Gln-65. Residues Lys-93 to Leu-221 form the FAD-binding FR-type domain. A disulfide bridge links Cys-196 with Cys-201. At Ser-197 the chain carries Phosphoserine. Thr-229 carries the post-translational modification Phosphothreonine. Ile-231 to Met-249 serves as a coordination point for NADP(+). Residues Leu-349 to Trp-373 are a coiled coil.

This sequence belongs to the ferredoxin--NADP reductase type 1 family. The cofactor is FAD. Expressed in shoots and roots. Less abundant in roots than RFNR2.

The protein resides in the plastid. It is found in the chloroplast. The catalysed reaction is 2 reduced [2Fe-2S]-[ferredoxin] + NADP(+) + H(+) = 2 oxidized [2Fe-2S]-[ferredoxin] + NADPH. Maintains the supply of reduced ferredoxin under non-photosynthetic conditions. This is Ferredoxin--NADP reductase, root isozyme 1, chloroplastic (RFNR1) from Arabidopsis thaliana (Mouse-ear cress).